The chain runs to 91 residues: Small ribosomal subunit protein uS19 (91 aa).

This sequence belongs to the universal ribosomal protein uS19 family.

Its function is as follows. Protein S19 forms a complex with S13 that binds strongly to the 16S ribosomal RNA. The polypeptide is Small ribosomal subunit protein uS19 (Methylacidiphilum infernorum (isolate V4) (Methylokorus infernorum (strain V4))).